The chain runs to 947 residues: Valine--tRNA ligase (947 aa).

Positions 45 to 55 (PNVTGSLHMGH) match the 'HIGH' region motif. The 'KMSKS' region motif lies at 591 to 595 (KMSKS). Lys594 contributes to the ATP binding site.

Belongs to the class-I aminoacyl-tRNA synthetase family. ValS type 1 subfamily. As to quaternary structure, monomer.

Its subcellular location is the cytoplasm. It carries out the reaction tRNA(Val) + L-valine + ATP = L-valyl-tRNA(Val) + AMP + diphosphate. Its function is as follows. Catalyzes the attachment of valine to tRNA(Val). As ValRS can inadvertently accommodate and process structurally similar amino acids such as threonine, to avoid such errors, it has a 'posttransfer' editing activity that hydrolyzes mischarged Thr-tRNA(Val) in a tRNA-dependent manner. The chain is Valine--tRNA ligase from Rhizobium meliloti (strain 1021) (Ensifer meliloti).